Reading from the N-terminus, the 461-residue chain is Chromosomal replication initiator protein DnaA (461 aa).

A domain I, interacts with DnaA modulators region spans residues 1–87; it reads MAVSLWQQCI…IGSRPSAKPV (87 aa). The segment at 87–124 is domain II; the sequence is VVQATAAVRTSRPVTREVTKPSFNTPHAEPMANANHRS. A disordered region spans residues 99–125; sequence PVTREVTKPSFNTPHAEPMANANHRSN. Residues 125 to 341 are domain III, AAA+ region; sequence NINPTYQFDN…GALNRVIANA (217 aa). Gly-169, Gly-171, Lys-172, and Thr-173 together coordinate ATP. The interval 342-461 is domain IV, binds dsDNA; sequence NFTGRPITID…YANLIRTLSS (120 aa).

It belongs to the DnaA family. Oligomerizes as a right-handed, spiral filament on DNA at oriC.

The protein localises to the cytoplasm. Its function is as follows. Plays an essential role in the initiation and regulation of chromosomal replication. ATP-DnaA binds to the origin of replication (oriC) to initiate formation of the DNA replication initiation complex once per cell cycle. Binds the DnaA box (a 9 base pair repeat at the origin) and separates the double-stranded (ds)DNA. Forms a right-handed helical filament on oriC DNA; dsDNA binds to the exterior of the filament while single-stranded (ss)DNA is stabiized in the filament's interior. The ATP-DnaA-oriC complex binds and stabilizes one strand of the AT-rich DNA unwinding element (DUE), permitting loading of DNA polymerase. After initiation quickly degrades to an ADP-DnaA complex that is not apt for DNA replication. Binds acidic phospholipids. This is Chromosomal replication initiator protein DnaA from Shewanella pealeana (strain ATCC 700345 / ANG-SQ1).